The sequence spans 388 residues: MKWLLLLGLVALSECIMYKVPLIRKKSLRRTLSERGLLKDFLKKHNLNPARKYFPQWEAPTLVDEQPLENYLDMEYFGTIGIGTPAQDFTVVFDTGSSNLWVPSVYCSSLACTNHNRFNPEDSSTYQSTSETVSITYGTGSMTGILGYDTVQVGGISDTNQIFGLSETEPGSFLYYAPFDGILGLAYPSISSSGATPVFDNIWNQGLVSQDLFSVYLSADDQSGSVVIFGGIDSSYYTGSLNWVPVTVEGYWQITVDSITMNGEAIACAEGCQAIVDTGTSLLTGPTSPIANIQSDIGASENSDGDMVVSCSAISSLPDIVFTINGVQYPVPPSAYILQSEGSCISGFQGMNLPTESGELWILGDVFIRQYFTVFDRANNQVGLAPVA.

The first 15 residues, 1-15 (MKWLLLLGLVALSEC), serve as a signal peptide directing secretion. The propeptide at 16-62 (IMYKVPLIRKKSLRRTLSERGLLKDFLKKHNLNPARKYFPQWEAPTL) is activation peptide. The Peptidase A1 domain maps to 76–385 (YFGTIGIGTP…DRANNQVGLA (310 aa)). D94 is an active-site residue. Residues C107 and C112 are joined by a disulfide bond. Position 130 is a phosphoserine (S130). Residues C268 and C272 are joined by a disulfide bond. The active site involves D277. Residues C311 and C344 are joined by a disulfide bond.

This sequence belongs to the peptidase A1 family.

Its subcellular location is the secreted. It catalyses the reaction Preferential cleavage: hydrophobic, preferably aromatic, residues in P1 and P1' positions. Cleaves 1-Phe-|-Val-2, 4-Gln-|-His-5, 13-Glu-|-Ala-14, 14-Ala-|-Leu-15, 15-Leu-|-Tyr-16, 16-Tyr-|-Leu-17, 23-Gly-|-Phe-24, 24-Phe-|-Phe-25 and 25-Phe-|-Tyr-26 bonds in the B chain of insulin.. Functionally, shows particularly broad specificity; although bonds involving phenylalanine and leucine are preferred, many others are also cleaved to some extent. This Homo sapiens (Human) protein is Pepsin A-4 (PGA4).